We begin with the raw amino-acid sequence, 118 residues long: MASKFKQVILDLTVEKDKKDKKGGKASKQSEEEPHHLEEVENKKPGGNVRRKVRRLVPNFLWAIPNRHVDRNEGGEDVGRFVVQGTEVKRKTTEQQVRPYRRFRTPEPDNHYDFCLIP.

The interval 14–50 is disordered; that stretch reads VEKDKKDKKGGKASKQSEEEPHHLEEVENKKPGGNVR. Over residues 28-44 the composition is skewed to basic and acidic residues; it reads KQSEEEPHHLEEVENKK. The tract at residues 30–88 is interaction with SIRT2; that stretch reads SEEEPHHLEEVENKKPGGNVRRKVRRLVPNFLWAIPNRHVDRNEGGEDVGRFVVQGTEV. The tract at residues 30-118 is interaction with alpha-tubulin; it reads SEEEPHHLEE…DNHYDFCLIP (89 aa). Position 115 (C115) interacts with Zn(2+).

This sequence belongs to the BEX family. In terms of assembly, interacts with alpha-tubulin. Interacts with SIRT2. Post-translationally, ubiquitinated and degraded by the proteasome. In terms of tissue distribution, expressed in both Sertoli and germ cells as well as interstitial area of the testis (at protein level).

It localises to the cytoplasm. The protein resides in the cytoskeleton. The protein localises to the spindle pole. Its subcellular location is the nucleus. May play a role in microtubule deacetylation by negatively regulating the SIRT2 deacetylase activity toward alpha-tubulin and thereby participate in the control of cell cycle progression and genomic stability. In absence of reductive stress, acts as a pseudosubstrate for the CRL2(FEM1B) complex: associates with FEM1B via zinc, thereby preventing association between FEM1B and its substrates. This is Protein BEX4 from Mus musculus (Mouse).